The chain runs to 434 residues: Epimerase FSL3 (434 aa).

Residue 125-126 (GF) participates in substrate binding. The Proton acceptor role is filled by Glu392.

This sequence belongs to the aldose epimerase family. In terms of assembly, monomer.

The protein operates within secondary metabolite biosynthesis. Its function is as follows. Epimerase; part of the gene cluster that mediates the biosynthesis of fusarielins F, G and H, decaketide compounds with 5 methylations and a decaline core that act as mycoestrogens as they stimulate growth of MCF-7 breast cancer cells. The initial compound in the pathway is produced by the reducing polyketide synthase FSL1. FSL1 lacks an active enoyl reductase (ER) domain and biosynthesis of fusarielins relies on the trans-acting enoyl reductase FSL5, before it is released through hydrolysis catalyzed by the thioesterase FSL2. Fusarielins F, G, and H have a C11=C12 cis double bond and is fully reduced between C10 and C11 and between C12 and C13. FSL3 can be involved in the formation of the C11=C12 cis double bond by moving a hypothetical C10=C11 or C12=C13 trans double bond to form prefusarielin. Prefusarielin is oxygenated at C15 and C16 by the cytochrome P450 monooxygenase FSL4, resulting in fusarielin F, which subsequently is epoxidized into fusarielin G by the same enzyme. The final step in the pathway is a reduction of the carboxylic acid moiety to yield fusarielin H via a still undetermined mechanism. The protein is Epimerase FSL3 of Gibberella zeae (strain ATCC MYA-4620 / CBS 123657 / FGSC 9075 / NRRL 31084 / PH-1) (Wheat head blight fungus).